We begin with the raw amino-acid sequence, 350 residues long: Adenine DNA glycosylase (350 aa).

The active-site Proton donor/acceptor is the Glu-37. Positions 192, 199, 202, and 208 each coordinate [4Fe-4S] cluster.

This sequence belongs to the Nth/MutY family. Monomer. [4Fe-4S] cluster is required as a cofactor.

The enzyme catalyses Hydrolyzes free adenine bases from 7,8-dihydro-8-oxoguanine:adenine mismatched double-stranded DNA, leaving an apurinic site.. Functionally, adenine glycosylase active on G-A mispairs. MutY also corrects error-prone DNA synthesis past GO lesions which are due to the oxidatively damaged form of guanine: 7,8-dihydro-8-oxoguanine (8-oxo-dGTP). The polypeptide is Adenine DNA glycosylase (mutY) (Escherichia coli (strain K12)).